The sequence spans 297 residues: ATP synthase F(1) complex subunit gamma, mitochondrial (297 aa).

A mitochondrion-targeting transit peptide spans 1-25 (MFSRAGVAGLSAWTLQPQWIQVRNM). At Lys39 the chain carries N6-acetyllysine. Lys49 is subject to N6-succinyllysine. Residue Lys55 is modified to N6-acetyllysine. Lys115 carries the post-translational modification N6-acetyllysine; alternate. Lys115 is subject to N6-succinyllysine; alternate. Position 146 is a phosphoserine (Ser146). Residue Lys154 is modified to N6-acetyllysine; alternate. Lys154 carries the N6-succinyllysine; alternate modification. Lys197 carries the post-translational modification N6-acetyllysine. Lys270 is modified (N6-succinyllysine).

This sequence belongs to the ATPase gamma chain family. Component of the ATP synthase complex composed at least of ATP5F1A/subunit alpha, ATP5F1B/subunit beta, ATP5MC1/subunit c (homooctomer), MT-ATP6/subunit a, MT-ATP8/subunit 8, ATP5ME/subunit e, ATP5MF/subunit f, ATP5MG/subunit g, ATP5MK/subunit k, ATP5MJ/subunit j, ATP5F1C/subunit gamma, ATP5F1D/subunit delta, ATP5F1E/subunit epsilon, ATP5PF/subunit F6, ATP5PB/subunit b, ATP5PD/subunit d, ATP5PO/subunit OSCP. ATP synthase complex consists of a soluble F(1) head domain (subunits alpha(3) and beta(3)) - the catalytic core - and a membrane F(0) domain - the membrane proton channel (subunits c, a, 8, e, f, g, k and j). These two domains are linked by a central stalk (subunits gamma, delta, and epsilon) rotating inside the F1 region and a stationary peripheral stalk (subunits F6, b, d, and OSCP). Interacts with FLVCR2; this interaction occurs in the absence of heme and is disrupted upon heme binding.

Its subcellular location is the mitochondrion inner membrane. Its function is as follows. Subunit gamma, of the mitochondrial membrane ATP synthase complex (F(1)F(0) ATP synthase or Complex V) that produces ATP from ADP in the presence of a proton gradient across the membrane which is generated by electron transport complexes of the respiratory chain. ATP synthase complex consist of a soluble F(1) head domain - the catalytic core - and a membrane F(1) domain - the membrane proton channel. These two domains are linked by a central stalk rotating inside the F(1) region and a stationary peripheral stalk. During catalysis, ATP synthesis in the catalytic domain of F(1) is coupled via a rotary mechanism of the central stalk subunits to proton translocation. In vivo, can only synthesize ATP although its ATP hydrolase activity can be activated artificially in vitro. With the central stalk subunit delta, is essential for the biogenesis of F(1) catalytic part of the ATP synthase complex namely in the formation of F1 assembly intermediate. In Pongo abelii (Sumatran orangutan), this protein is ATP synthase F(1) complex subunit gamma, mitochondrial.